We begin with the raw amino-acid sequence, 143 residues long: Large ribosomal subunit protein uL11 (143 aa).

The protein belongs to the universal ribosomal protein uL11 family. As to quaternary structure, part of the ribosomal stalk of the 50S ribosomal subunit. Interacts with L10 and the large rRNA to form the base of the stalk. L10 forms an elongated spine to which L12 dimers bind in a sequential fashion forming a multimeric L10(L12)X complex. One or more lysine residues are methylated.

Its function is as follows. Forms part of the ribosomal stalk which helps the ribosome interact with GTP-bound translation factors. This chain is Large ribosomal subunit protein uL11, found in Caulobacter sp. (strain K31).